The primary structure comprises 258 residues: UPF0246 protein YaaA (258 aa).

It belongs to the UPF0246 family.

In Escherichia coli (strain SE11), this protein is UPF0246 protein YaaA.